The chain runs to 265 residues: 4-hydroxy-tetrahydrodipicolinate reductase (265 aa).

G9 to M14 contributes to the NAD(+) binding site. K37 provides a ligand contact to NADP(+). Residues G99–T101 and A125–F128 each bind NAD(+). H155 serves as the catalytic Proton donor/acceptor. H156 is a binding site for (S)-2,3,4,5-tetrahydrodipicolinate. K159 serves as the catalytic Proton donor. G165 to T166 contacts (S)-2,3,4,5-tetrahydrodipicolinate.

This sequence belongs to the DapB family.

Its subcellular location is the cytoplasm. The catalysed reaction is (S)-2,3,4,5-tetrahydrodipicolinate + NAD(+) + H2O = (2S,4S)-4-hydroxy-2,3,4,5-tetrahydrodipicolinate + NADH + H(+). The enzyme catalyses (S)-2,3,4,5-tetrahydrodipicolinate + NADP(+) + H2O = (2S,4S)-4-hydroxy-2,3,4,5-tetrahydrodipicolinate + NADPH + H(+). Its pathway is amino-acid biosynthesis; L-lysine biosynthesis via DAP pathway; (S)-tetrahydrodipicolinate from L-aspartate: step 4/4. In terms of biological role, catalyzes the conversion of 4-hydroxy-tetrahydrodipicolinate (HTPA) to tetrahydrodipicolinate. The chain is 4-hydroxy-tetrahydrodipicolinate reductase from Lysinibacillus sphaericus (strain C3-41).